Reading from the N-terminus, the 372-residue chain is Protein RecA (372 aa).

Position 81-88 (81-88 (GPESSGKT)) interacts with ATP.

The protein belongs to the RecA family.

The protein resides in the cytoplasm. Its function is as follows. Can catalyze the hydrolysis of ATP in the presence of single-stranded DNA, the ATP-dependent uptake of single-stranded DNA by duplex DNA, and the ATP-dependent hybridization of homologous single-stranded DNAs. It interacts with LexA causing its activation and leading to its autocatalytic cleavage. This is Protein RecA from Haemophilus ducreyi (strain 35000HP / ATCC 700724).